We begin with the raw amino-acid sequence, 417 residues long: UDP-N-acetylglucosamine 1-carboxyvinyltransferase (417 aa).

22–23 lines the phosphoenolpyruvate pocket; that stretch reads KN. Arg-92 serves as a coordination point for UDP-N-acetyl-alpha-D-glucosamine. The active-site Proton donor is Cys-116. Residue Cys-116 is modified to 2-(S-cysteinyl)pyruvic acid O-phosphothioketal. Asp-304 and Ile-326 together coordinate UDP-N-acetyl-alpha-D-glucosamine.

This sequence belongs to the EPSP synthase family. MurA subfamily.

It localises to the cytoplasm. It catalyses the reaction phosphoenolpyruvate + UDP-N-acetyl-alpha-D-glucosamine = UDP-N-acetyl-3-O-(1-carboxyvinyl)-alpha-D-glucosamine + phosphate. It participates in cell wall biogenesis; peptidoglycan biosynthesis. Functionally, cell wall formation. Adds enolpyruvyl to UDP-N-acetylglucosamine. The sequence is that of UDP-N-acetylglucosamine 1-carboxyvinyltransferase from Geotalea uraniireducens (strain Rf4) (Geobacter uraniireducens).